A 59-amino-acid polypeptide reads, in one-letter code: Alpha-like toxin CsEv5 (59 aa).

The LCN-type CS-alpha/beta domain occupies 1–59 (KDGYPVDSKGCKLSCVANNYCDNQCKMKKASGGHCYAMSCYCEGLPENAKVSDSATNIC). 4 cysteine pairs are disulfide-bonded: Cys11–Cys59, Cys15–Cys35, Cys21–Cys40, and Cys25–Cys42.

This sequence belongs to the long (4 C-C) scorpion toxin superfamily. Sodium channel inhibitor family. In terms of tissue distribution, expressed by the venom gland.

It is found in the secreted. Functionally, binds voltage-independently sodium channels (Nav) and inhibits the inactivation of the activated channels, thereby blocking neuronal transmission. Is highly toxic to insects and barely toxic to mammals. As it does not compete with the classical alpha-toxin AaH2, this toxin is considered as an alpha-like toxin. The chain is Alpha-like toxin CsEv5 from Centruroides sculpturatus (Arizona bark scorpion).